The sequence spans 438 residues: Phosphatidylserine decarboxylase proenzyme 1, mitochondrial (438 aa).

The transit peptide at 1–21 directs the protein to the mitochondrion; it reads MRRFRVWPPSPSPWPLLASRP. Residues 22-48 are Mitochondrial matrix-facing; sequence CPHSHHHRSPFHASANSGARQGNFILP. The helical transmembrane segment at 49 to 67 threads the bilayer; that stretch reads GATAATLVMFGILHARRMY. The Mitochondrial intermembrane portion of the chain corresponds to 68-438; sequence EDQKVVERKE…EAIGRWTSRE (371 aa). Catalysis depends on charge relay system; for autoendoproteolytic cleavage activity residues aspartate 173, histidine 273, and serine 387. Serine 387 serves as the catalytic Schiff-base intermediate with substrate; via pyruvic acid; for decarboxylase activity. At serine 387 the chain carries Pyruvic acid (Ser); by autocatalysis.

The protein belongs to the phosphatidylserine decarboxylase family. PSD-B subfamily. Eukaryotic type I sub-subfamily. In terms of assembly, heterodimer of a large membrane-associated beta subunit and a small pyruvoyl-containing alpha subunit. It depends on pyruvate as a cofactor. Is synthesized initially as an inactive proenzyme. Formation of the active enzyme involves a self-maturation process in which the active site pyruvoyl group is generated from an internal serine residue via an autocatalytic post-translational modification. Two non-identical subunits are generated from the proenzyme in this reaction, and the pyruvate is formed at the N-terminus of the alpha chain, which is derived from the carboxyl end of the proenzyme. The autoendoproteolytic cleavage occurs by a canonical serine protease mechanism, in which the side chain hydroxyl group of the serine supplies its oxygen atom to form the C-terminus of the beta chain, while the remainder of the serine residue undergoes an oxidative deamination to produce ammonia and the pyruvoyl prosthetic group on the alpha chain. During this reaction, the Ser that is part of the protease active site of the proenzyme becomes the pyruvoyl prosthetic group, which constitutes an essential element of the active site of the mature decarboxylase.

Its subcellular location is the mitochondrion inner membrane. The enzyme catalyses a 1,2-diacyl-sn-glycero-3-phospho-L-serine + H(+) = a 1,2-diacyl-sn-glycero-3-phosphoethanolamine + CO2. The protein operates within phospholipid metabolism; phosphatidylethanolamine biosynthesis; phosphatidylethanolamine from CDP-diacylglycerol: step 2/2. Its function is as follows. Catalyzes the formation of phosphatidylethanolamine (PtdEtn) from phosphatidylserine (PtdSer). Plays a central role in phospholipid metabolism and in the interorganelle trafficking of phosphatidylserine. The polypeptide is Phosphatidylserine decarboxylase proenzyme 1, mitochondrial (PSD1) (Oryza sativa subsp. japonica (Rice)).